The primary structure comprises 219 residues: Izumo sperm-egg fusion protein 4 (219 aa).

The signal sequence occupies residues 1-15 (MALLLCLVGVTAALA). Asparagine 206 carries an N-linked (GlcNAc...) asparagine glycan.

This sequence belongs to the Izumo family.

The protein resides in the secreted. The polypeptide is Izumo sperm-egg fusion protein 4 (IZUMO4) (Macaca fascicularis (Crab-eating macaque)).